The following is a 306-amino-acid chain: 2-phospho-L-lactate transferase (306 aa).

The 7,8-didemethyl-8-hydroxy-5-deazariboflavin site is built by Asp54 and Arg93.

This sequence belongs to the CofD family. Homodimer. Requires Mg(2+) as cofactor.

The enzyme catalyses (2S)-lactyl-2-diphospho-5'-guanosine + 7,8-didemethyl-8-hydroxy-5-deazariboflavin = oxidized coenzyme F420-0 + GMP + H(+). It functions in the pathway cofactor biosynthesis; coenzyme F420 biosynthesis. In terms of biological role, catalyzes the transfer of the 2-phospholactate moiety from (2S)-lactyl-2-diphospho-5'-guanosine to 7,8-didemethyl-8-hydroxy-5-deazariboflavin (FO) with the formation of oxidized coenzyme F420-0 and GMP. The chain is 2-phospho-L-lactate transferase from Methanothermobacter thermautotrophicus (strain ATCC 29096 / DSM 1053 / JCM 10044 / NBRC 100330 / Delta H) (Methanobacterium thermoautotrophicum).